The chain runs to 350 residues: Geranylgeranyl pyrophosphate synthase (350 aa).

Residues lysine 66, arginine 69, and histidine 98 each coordinate isopentenyl diphosphate. Residues aspartate 105 and aspartate 109 each contribute to the Mg(2+) site. Arginine 114 contacts dimethylallyl diphosphate. An isopentenyl diphosphate-binding site is contributed by arginine 115. Positions 200, 201, 236, 243, and 263 each coordinate dimethylallyl diphosphate.

Belongs to the FPP/GGPP synthase family. The cofactor is Mg(2+).

It catalyses the reaction isopentenyl diphosphate + dimethylallyl diphosphate = (2E)-geranyl diphosphate + diphosphate. The catalysed reaction is isopentenyl diphosphate + (2E)-geranyl diphosphate = (2E,6E)-farnesyl diphosphate + diphosphate. The enzyme catalyses isopentenyl diphosphate + (2E,6E)-farnesyl diphosphate = (2E,6E,10E)-geranylgeranyl diphosphate + diphosphate. It functions in the pathway secondary metabolite biosynthesis; terpenoid biosynthesis. In terms of biological role, geranylgeranyl pyrophosphate synthase; part of the gene cluster that mediates the biosynthesis of pleuromutilin, a tricyclic diterpene showing antibacterial properties. The geranylgeranyl diphosphate (GGPP) synthase ple4 catalyzes the first step in pleuromutilin biosynthesis. GGPP is then substrate of the premutilin synthase (PS) ple3 to yield premutilin. Premutilin synthase is a bifunctional enzyme composed of the fusion of a class II diterpene cyclase (DTC) and a class I diterpene synthase (DTS), with the corresponding domains and active sites containing characteristic aspartate-rich motifs. GGPP is first converted to mutildienyl-diphosphate (MPP) at the class II DTC site. MPP is subsequently further cyclized at the class I DTS site, followed by a 1,5-hydride shift and addition of water prior to terminating deprotonation, to yield premutilin. The cytochrome P450 monooxygenases ple5 and ple6 hydroxylate premutilin at C-11 and C-3, respectively, producing 11-hydroxypremutilin and 3-hydroxypremutilin. The combination of the actions of both ple5 and ple6 leads to the production of 3,11-dihydroxypremutilin. The short chain dehydrogenase ple7 further converts 3,11-dihydroxypremutilin into mutilin. The acetyltransferase ple2 then acetylates mutilin to produce 14-O-acetylmutilin. Finally, the cytochrome P450 monooxygenase ple1 catalyzes hydroxylation on the alpha position of the acetyl side chain of 14-O-acetylmutilin to yield pleuromutilin. The protein is Geranylgeranyl pyrophosphate synthase of Rhodocybe pseudopiperita (Clitopilus pseudopiperitus).